A 286-amino-acid polypeptide reads, in one-letter code: KH domain-containing protein At2g38610 (286 aa).

Position 2 is an N-acetylserine (Ser2). The 68-residue stretch at Glu141 to Leu208 folds into the KH domain. Residues Ser256–Cys286 are disordered. Ser263 and Ser273 each carry phosphoserine.

The protein localises to the nucleus. The polypeptide is KH domain-containing protein At2g38610 (Arabidopsis thaliana (Mouse-ear cress)).